A 196-amino-acid polypeptide reads, in one-letter code: MTKSMYAYVRDAWKIPDDTGVKALLWERMQDWRREGSIVRVRRPTRIDRARALGYKAKQGIVVVRVKVRRGGRRASRYVRGRRTARMGVNRKTMGKSIQRIAEERACRKYPNMEVLNSYWVGEDGRQKWYEVILLDPHHPSIINDKTLNWISKPGHRGRSERGLTSAGVKGRGMRRRGKGTEKCRPSVRANANRAK.

The interval 154–196 (PGHRGRSERGLTSAGVKGRGMRRRGKGTEKCRPSVRANANRAK) is disordered.

It belongs to the eukaryotic ribosomal protein eL15 family.

This chain is Large ribosomal subunit protein eL15, found in Methanospirillum hungatei JF-1 (strain ATCC 27890 / DSM 864 / NBRC 100397 / JF-1).